Here is a 588-residue protein sequence, read N- to C-terminus: Proline--tRNA ligase (588 aa).

It belongs to the class-II aminoacyl-tRNA synthetase family. ProS type 1 subfamily. As to quaternary structure, homodimer.

The protein resides in the cytoplasm. It catalyses the reaction tRNA(Pro) + L-proline + ATP = L-prolyl-tRNA(Pro) + AMP + diphosphate. Catalyzes the attachment of proline to tRNA(Pro) in a two-step reaction: proline is first activated by ATP to form Pro-AMP and then transferred to the acceptor end of tRNA(Pro). As ProRS can inadvertently accommodate and process non-cognate amino acids such as alanine and cysteine, to avoid such errors it has two additional distinct editing activities against alanine. One activity is designated as 'pretransfer' editing and involves the tRNA(Pro)-independent hydrolysis of activated Ala-AMP. The other activity is designated 'posttransfer' editing and involves deacylation of mischarged Ala-tRNA(Pro). The misacylated Cys-tRNA(Pro) is not edited by ProRS. This chain is Proline--tRNA ligase, found in Helicobacter hepaticus (strain ATCC 51449 / 3B1).